A 300-amino-acid chain; its full sequence is Acetylglutamate kinase (300 aa).

Substrate is bound by residues 73-74 (GG), Arg-95, and Asn-197.

This sequence belongs to the acetylglutamate kinase family. ArgB subfamily.

The protein resides in the cytoplasm. The enzyme catalyses N-acetyl-L-glutamate + ATP = N-acetyl-L-glutamyl 5-phosphate + ADP. The protein operates within amino-acid biosynthesis; L-arginine biosynthesis; N(2)-acetyl-L-ornithine from L-glutamate: step 2/4. Functionally, catalyzes the ATP-dependent phosphorylation of N-acetyl-L-glutamate. The polypeptide is Acetylglutamate kinase (Polynucleobacter asymbioticus (strain DSM 18221 / CIP 109841 / QLW-P1DMWA-1) (Polynucleobacter necessarius subsp. asymbioticus)).